The primary structure comprises 297 residues: 3-methyl-2-oxobutanoate hydroxymethyltransferase (297 aa).

Over residues 1 to 12 the composition is skewed to polar residues; sequence MSEQISEQSEQN. The segment at 1–36 is disordered; that stretch reads MSEQISEQSEQNVYGACPPVPAGESSPSAASAPRTK. Residues 22–33 are compositionally biased toward low complexity; that stretch reads AGESSPSAASAP. Residues Asp78 and Asp117 each coordinate Mg(2+). 3-methyl-2-oxobutanoate contacts are provided by residues 78–79, Asp117, and Lys147; that span reads DS. Position 149 (Glu149) interacts with Mg(2+). Glu215 serves as the catalytic Proton acceptor.

The protein belongs to the PanB family. Homodecamer; pentamer of dimers. Requires Mg(2+) as cofactor.

The protein resides in the cytoplasm. It carries out the reaction 3-methyl-2-oxobutanoate + (6R)-5,10-methylene-5,6,7,8-tetrahydrofolate + H2O = 2-dehydropantoate + (6S)-5,6,7,8-tetrahydrofolate. It participates in cofactor biosynthesis; (R)-pantothenate biosynthesis; (R)-pantoate from 3-methyl-2-oxobutanoate: step 1/2. Its function is as follows. Catalyzes the reversible reaction in which hydroxymethyl group from 5,10-methylenetetrahydrofolate is transferred onto alpha-ketoisovalerate to form ketopantoate. In Mycobacterium ulcerans (strain Agy99), this protein is 3-methyl-2-oxobutanoate hydroxymethyltransferase.